Reading from the N-terminus, the 86-residue chain is Serine protease inhibitor Kazal-type 9 (86 aa).

The signal sequence occupies residues 1-19 (MRATAIVLLLALTLATMFS). A Kazal-like domain is found at 26–86 (TKQMVDCSHY…TLKFVHFGKC (61 aa)). 3 disulfide bridges follow: Cys32/Cys68, Cys46/Cys65, and Cys54/Cys86.

In terms of assembly, dimer. Interacts with KLK5 and KLK8. In terms of tissue distribution, skin. Highly expressed at sites of hyperkeratosis. Also detected in thymus, tonsils, testis, pancreas, liver, placenta and brain. Expressed at stratum granulosum and stratum corneum at palmar and plantar sites (at protein level).

It localises to the secreted. Its function is as follows. Serine protease inhibitor which specifically inhibits KLK5. May contribute to the regulation of the desquamation process in skin by inhibiting KLK5. This Homo sapiens (Human) protein is Serine protease inhibitor Kazal-type 9 (SPINK9).